The sequence spans 262 residues: Phosphoribosylformylglycinamidine synthase subunit PurQ (262 aa).

Residues 2-238 (RIAVIQFPGT…FAWQLPRKHP (237 aa)) form the Glutamine amidotransferase type-1 domain. The Nucleophile role is filled by C87. Active-site residues include H223 and E225.

Part of the FGAM synthase complex composed of 1 PurL, 1 PurQ and 2 PurS subunits.

The protein localises to the cytoplasm. The enzyme catalyses N(2)-formyl-N(1)-(5-phospho-beta-D-ribosyl)glycinamide + L-glutamine + ATP + H2O = 2-formamido-N(1)-(5-O-phospho-beta-D-ribosyl)acetamidine + L-glutamate + ADP + phosphate + H(+). It carries out the reaction L-glutamine + H2O = L-glutamate + NH4(+). It participates in purine metabolism; IMP biosynthesis via de novo pathway; 5-amino-1-(5-phospho-D-ribosyl)imidazole from N(2)-formyl-N(1)-(5-phospho-D-ribosyl)glycinamide: step 1/2. Its function is as follows. Part of the phosphoribosylformylglycinamidine synthase complex involved in the purines biosynthetic pathway. Catalyzes the ATP-dependent conversion of formylglycinamide ribonucleotide (FGAR) and glutamine to yield formylglycinamidine ribonucleotide (FGAM) and glutamate. The FGAM synthase complex is composed of three subunits. PurQ produces an ammonia molecule by converting glutamine to glutamate. PurL transfers the ammonia molecule to FGAR to form FGAM in an ATP-dependent manner. PurS interacts with PurQ and PurL and is thought to assist in the transfer of the ammonia molecule from PurQ to PurL. This is Phosphoribosylformylglycinamidine synthase subunit PurQ from Methanothrix thermoacetophila (strain DSM 6194 / JCM 14653 / NBRC 101360 / PT) (Methanosaeta thermophila).